We begin with the raw amino-acid sequence, 302 residues long: Sulfate adenylyltransferase subunit 2 (302 aa).

Belongs to the PAPS reductase family. CysD subfamily. As to quaternary structure, heterodimer composed of CysD, the smaller subunit, and CysN.

The catalysed reaction is sulfate + ATP + H(+) = adenosine 5'-phosphosulfate + diphosphate. The protein operates within sulfur metabolism; hydrogen sulfide biosynthesis; sulfite from sulfate: step 1/3. Functionally, with CysN forms the ATP sulfurylase (ATPS) that catalyzes the adenylation of sulfate producing adenosine 5'-phosphosulfate (APS) and diphosphate, the first enzymatic step in sulfur assimilation pathway. APS synthesis involves the formation of a high-energy phosphoric-sulfuric acid anhydride bond driven by GTP hydrolysis by CysN coupled to ATP hydrolysis by CysD. This is Sulfate adenylyltransferase subunit 2 from Shigella dysenteriae serotype 1 (strain Sd197).